A 29-amino-acid polypeptide reads, in one-letter code: Cytochrome b6-f complex subunit 8 (29 aa).

The chain crosses the membrane as a helical span at residues 3–23; the sequence is IVSLAWAGLMVVFTFSLSLVV.

The protein belongs to the PetN family. As to quaternary structure, the 4 large subunits of the cytochrome b6-f complex are cytochrome b6, subunit IV (17 kDa polypeptide, PetD), cytochrome f and the Rieske protein, while the 4 small subunits are PetG, PetL, PetM and PetN. The complex functions as a dimer.

Its subcellular location is the plastid. It localises to the chloroplast thylakoid membrane. In terms of biological role, component of the cytochrome b6-f complex, which mediates electron transfer between photosystem II (PSII) and photosystem I (PSI), cyclic electron flow around PSI, and state transitions. This is Cytochrome b6-f complex subunit 8 from Arabis hirsuta (Hairy rock-cress).